Here is a 204-residue protein sequence, read N- to C-terminus: Ras-related protein RABG1 (204 aa).

12–19 (GDSGVGKT) is a binding site for GTP. The Effector region motif lies at 34–42 (HNSTIYVDL). GTP contacts are provided by residues 60–64 (DTAGQ), 122–125 (NKTD), and 155–156 (SA). Residues cysteine 202 and cysteine 204 are each lipidated (S-geranylgeranyl cysteine). Position 204 is a cysteine methyl ester (cysteine 204).

It belongs to the small GTPase superfamily. Rab family.

It is found in the cell membrane. In terms of biological role, intracellular vesicle trafficking and protein transport. The polypeptide is Ras-related protein RABG1 (RABG1) (Arabidopsis thaliana (Mouse-ear cress)).